Reading from the N-terminus, the 168-residue chain is Small ribosomal subunit protein uS7c (168 aa).

Belongs to the universal ribosomal protein uS7 family. In terms of assembly, part of the 30S ribosomal subunit.

It is found in the plastid. It localises to the chloroplast. Its function is as follows. One of the primary rRNA binding proteins, it binds directly to 16S rRNA where it nucleates assembly of the head domain of the 30S subunit. The protein is Small ribosomal subunit protein uS7c (rps7) of Chlamydomonas reinhardtii (Chlamydomonas smithii).